The primary structure comprises 348 residues: RNA 3'-terminal phosphate cyclase (348 aa).

ATP-binding positions include Gln107 and 290–294 (HLADQ). His316 serves as the catalytic Tele-AMP-histidine intermediate.

It belongs to the RNA 3'-terminal cyclase family. Type 1 subfamily.

Its subcellular location is the cytoplasm. The catalysed reaction is a 3'-end 3'-phospho-ribonucleotide-RNA + ATP = a 3'-end 2',3'-cyclophospho-ribonucleotide-RNA + AMP + diphosphate. Functionally, catalyzes the conversion of 3'-phosphate to a 2',3'-cyclic phosphodiester at the end of RNA. The mechanism of action of the enzyme occurs in 3 steps: (A) adenylation of the enzyme by ATP; (B) transfer of adenylate to an RNA-N3'P to produce RNA-N3'PP5'A; (C) and attack of the adjacent 2'-hydroxyl on the 3'-phosphorus in the diester linkage to produce the cyclic end product. The biological role of this enzyme is unknown but it is likely to function in some aspects of cellular RNA processing. The protein is RNA 3'-terminal phosphate cyclase of Nostoc punctiforme (strain ATCC 29133 / PCC 73102).